The chain runs to 350 residues: Small ribosomal subunit biogenesis GTPase RsgA (350 aa).

The span at 1 to 17 (MSKNKLSKGQQRRVQAN) shows a compositional bias: polar residues. A disordered region spans residues 1–35 (MSKNKLSKGQQRRVQANHQRRLRTDRKPELDDSQL). The CP-type G domain occupies 103–273 (TSVLTRPDLY…VIDSPGVREF (171 aa)). GTP contacts are provided by residues 159-162 (NKID) and 213-221 (GQSGVGKSS). The Zn(2+) site is built by Cys-297, Cys-302, His-304, and Cys-310.

Belongs to the TRAFAC class YlqF/YawG GTPase family. RsgA subfamily. Monomer. Associates with 30S ribosomal subunit, binds 16S rRNA. It depends on Zn(2+) as a cofactor.

The protein resides in the cytoplasm. One of several proteins that assist in the late maturation steps of the functional core of the 30S ribosomal subunit. Helps release RbfA from mature subunits. May play a role in the assembly of ribosomal proteins into the subunit. Circularly permuted GTPase that catalyzes slow GTP hydrolysis, GTPase activity is stimulated by the 30S ribosomal subunit. In Yersinia enterocolitica serotype O:8 / biotype 1B (strain NCTC 13174 / 8081), this protein is Small ribosomal subunit biogenesis GTPase RsgA.